The sequence spans 287 residues: MKNILSIQSHVVFGHAGNSAAEFPMRRMGVNVWPLNTVQFSNHTQYAQWKGCVMPANHLTEIVQGIEEIEQLKSCHAVLSGYIGSAEQGGHIIDIVKRVKAVNPDAWYFCDPVMGHPEKGCIVVPGVAEFLCKDALPVSDIIAPNLLELETLSMQKVTNVEQAVMAARTLCDKGPDIVLVKHLSRAGYRTDRFEMLLVTKEHSWHVSRPLVDFGERQPVGVGDLTSGLLLVNLLKGESLQTALEHVAAAVYEVMVTTKEMGEYELQIVAAQDRMVAPNHKFWAIQLD.

Substrate contacts are provided by residues Ser9 and 44–45; that span reads TQ. ATP-binding positions include Asp111, Ala143, Glu148, Lys181, and 208–211; that span reads RPLV. A substrate-binding site is contributed by Asp223.

This sequence belongs to the pyridoxine kinase family. PdxY subfamily. In terms of assembly, homodimer. Requires Mg(2+) as cofactor.

The catalysed reaction is pyridoxal + ATP = pyridoxal 5'-phosphate + ADP + H(+). It participates in cofactor metabolism; pyridoxal 5'-phosphate salvage; pyridoxal 5'-phosphate from pyridoxal: step 1/1. Its function is as follows. Pyridoxal kinase involved in the salvage pathway of pyridoxal 5'-phosphate (PLP). Catalyzes the phosphorylation of pyridoxal to PLP. The chain is Pyridoxal kinase PdxY from Photorhabdus laumondii subsp. laumondii (strain DSM 15139 / CIP 105565 / TT01) (Photorhabdus luminescens subsp. laumondii).